The following is a 549-amino-acid chain: Endoplasmic reticulum mannosyl-oligosaccharide 1,2-alpha-mannosidase (549 aa).

Topologically, residues 1–4 (MKNS) are cytoplasmic. Residues 5–24 (VGISIATIVAIIAAIYYVPW) traverse the membrane as a helical; Signal-anchor for type II membrane protein segment. The Lumenal portion of the chain corresponds to 25–354 (YEHFERKSPG…LLASGSTEGL (330 aa)). Residues asparagine 96, asparagine 155, and asparagine 224 are each glycosylated (N-linked (GlcNAc...) asparagine). A disulfide bridge connects residues cysteine 340 and cysteine 385. Residue glutamate 399 is the Proton donor of the active site. An intrachain disulfide couples cysteine 468 to cysteine 471. Ca(2+) is bound at residue threonine 525.

This sequence belongs to the glycosyl hydrolase 47 family. In terms of assembly, homodimer. Requires Ca(2+) as cofactor.

The protein localises to the endoplasmic reticulum membrane. It catalyses the reaction N(4)-(alpha-D-Man-(1-&gt;2)-alpha-D-Man-(1-&gt;2)-alpha-D-Man-(1-&gt;3)-[alpha-D-Man-(1-&gt;2)-alpha-D-Man-(1-&gt;3)-[alpha-D-Man-(1-&gt;2)-alpha-D-Man-(1-&gt;6)]-alpha-D-Man-(1-&gt;6)]-beta-D-Man-(1-&gt;4)-beta-D-GlcNAc-(1-&gt;4)-beta-D-GlcNAc)-L-asparaginyl-[protein] (N-glucan mannose isomer 9A1,2,3B1,2,3) + 4 H2O = N(4)-(alpha-D-Man-(1-&gt;3)-[alpha-D-Man-(1-&gt;3)-[alpha-D-Man-(1-&gt;6)]-alpha-D-Man-(1-&gt;6)]-beta-D-Man-(1-&gt;4)-beta-D-GlcNAc-(1-&gt;4)-beta-D-GlcNAc)-L-asparaginyl-[protein] (N-glucan mannose isomer 5A1,2) + 4 beta-D-mannose. The enzyme catalyses N(4)-(alpha-D-Man-(1-&gt;2)-alpha-D-Man-(1-&gt;2)-alpha-D-Man-(1-&gt;3)-[alpha-D-Man-(1-&gt;3)-[alpha-D-Man-(1-&gt;2)-alpha-D-Man-(1-&gt;6)]-alpha-D-Man-(1-&gt;6)]-beta-D-Man-(1-&gt;4)-beta-D-GlcNAc-(1-&gt;4)-beta-D-GlcNAc)-L-asparaginyl-[protein] (N-glucan mannose isomer 8A1,2,3B1,3) + 3 H2O = N(4)-(alpha-D-Man-(1-&gt;3)-[alpha-D-Man-(1-&gt;3)-[alpha-D-Man-(1-&gt;6)]-alpha-D-Man-(1-&gt;6)]-beta-D-Man-(1-&gt;4)-beta-D-GlcNAc-(1-&gt;4)-beta-D-GlcNAc)-L-asparaginyl-[protein] (N-glucan mannose isomer 5A1,2) + 3 beta-D-mannose. Its pathway is protein modification; protein glycosylation. Functionally, involved in glycoprotein quality control as it is important for the targeting of misfolded glycoproteins for degradation. It primarily trims a single alpha-1,2-linked mannose residue from Man(9)GlcNAc(2) to produce Man(8)GlcNAc(2), but at high enzyme concentrations it further trims the carbohydrates to Man(5)GlcNAc(2). This is Endoplasmic reticulum mannosyl-oligosaccharide 1,2-alpha-mannosidase (MNS1) from Saccharomyces cerevisiae (strain ATCC 204508 / S288c) (Baker's yeast).